The primary structure comprises 466 residues: Soluble pyridine nucleotide transhydrogenase (466 aa).

36–45 (ERYQNVGGGC) is an FAD binding site.

It belongs to the class-I pyridine nucleotide-disulfide oxidoreductase family. As to quaternary structure, homooligomer; probable homooctamer. The cofactor is FAD.

It is found in the cytoplasm. The enzyme catalyses NAD(+) + NADPH = NADH + NADP(+). In terms of biological role, conversion of NADPH, generated by peripheral catabolic pathways, to NADH, which can enter the respiratory chain for energy generation. This chain is Soluble pyridine nucleotide transhydrogenase, found in Shigella flexneri.